The primary structure comprises 536 residues: Probable serine/threonine-protein kinase DDB_G0268550 (536 aa).

The 292-residue stretch at 14–305 (EIIEKNYRKG…IDVLEIHPFL (292 aa)) folds into the Protein kinase domain. ATP-binding positions include 20–28 (YRKGGFSKI) and K51. D147 (proton acceptor) is an active-site residue. A disordered region spans residues 161 to 192 (DNNNNNNNNNNNNNNNNNNNSNINDDNNNSNS).

Belongs to the protein kinase superfamily. Ser/Thr protein kinase family. Requires Mg(2+) as cofactor.

It catalyses the reaction L-seryl-[protein] + ATP = O-phospho-L-seryl-[protein] + ADP + H(+). The catalysed reaction is L-threonyl-[protein] + ATP = O-phospho-L-threonyl-[protein] + ADP + H(+). This chain is Probable serine/threonine-protein kinase DDB_G0268550, found in Dictyostelium discoideum (Social amoeba).